A 331-amino-acid polypeptide reads, in one-letter code: Glucokinase (331 aa).

16–21 (GDIGGT) is an ATP binding site.

Belongs to the bacterial glucokinase family.

The protein localises to the cytoplasm. It catalyses the reaction D-glucose + ATP = D-glucose 6-phosphate + ADP + H(+). This Pseudomonas aeruginosa (strain LESB58) protein is Glucokinase.